Consider the following 258-residue polypeptide: Type III pantothenate kinase (258 aa).

Position 6-13 (6-13) interacts with ATP; the sequence is DAGNTRIK. Residues Y98 and 105 to 108 each bind substrate; that span reads GSDR. Catalysis depends on D107, which acts as the Proton acceptor. T131 serves as a coordination point for ATP. A substrate-binding site is contributed by T184.

The protein belongs to the type III pantothenate kinase family. As to quaternary structure, homodimer. Requires NH4(+) as cofactor. K(+) is required as a cofactor.

It localises to the cytoplasm. It carries out the reaction (R)-pantothenate + ATP = (R)-4'-phosphopantothenate + ADP + H(+). It participates in cofactor biosynthesis; coenzyme A biosynthesis; CoA from (R)-pantothenate: step 1/5. In terms of biological role, catalyzes the phosphorylation of pantothenate (Pan), the first step in CoA biosynthesis. The chain is Type III pantothenate kinase from Herminiimonas arsenicoxydans.